Here is a 145-residue protein sequence, read N- to C-terminus: Histone H3-like centromeric protein A (145 aa).

A compositionally biased stretch (basic residues) spans 1–19 (MPRHTSAHKRKPSTPRRRS). The interval 1 to 54 (MPRHTSAHKRKPSTPRRRSPPASLPPPAGSRTRRHSGPSGSSPRKKHKFRPGTR) is disordered. At S19 the chain carries Phosphoserine. An H3-like region spans residues 51–145 (PGTRALMEIR…ARRIRGVEHM (95 aa)).

Belongs to the histone H3 family. In terms of assembly, component of centromeric nucleosomes, where DNA is wrapped around a histone octamer core. The octamer contains two molecules each of H2A, H2B, CENPA and H4 assembled in one CENPA-H4 heterotetramer and two H2A-H2B heterodimers. CENPA modulates the DNA-binding characteristics of nucleosomes so that protruding DNA ends have higher flexibility than in nucleosomes containing conventional histone H3.

It localises to the nucleus. Its subcellular location is the chromosome. It is found in the centromere. Histone H3-like nucleosomal protein that is specifically found in centromeric nucleosomes. Replaces conventional H3 in the nucleosome core of centromeric chromatin that serves as an assembly site for the inner kinetochore. The presence of CENPA subtly modifies the nucleosome structure and the way DNA is wrapped around the nucleosome and gives rise to protruding DNA ends that are less well-ordered and rigid compared to nucleosomes containing histone H3. May serve as an epigenetic mark that propagates centromere identity through replication and cell division. Required for recruitment and assembly of kinetochore proteins, and as a consequence required for progress through mitosis, chromosome segregation and cytokinesis. In Danio rerio (Zebrafish), this protein is Histone H3-like centromeric protein A (cenpa).